We begin with the raw amino-acid sequence, 220 residues long: dTTP/UTP pyrophosphatase (220 aa).

D83 functions as the Proton acceptor in the catalytic mechanism.

It belongs to the Maf family. YhdE subfamily. A divalent metal cation is required as a cofactor.

The protein resides in the cytoplasm. It catalyses the reaction dTTP + H2O = dTMP + diphosphate + H(+). The catalysed reaction is UTP + H2O = UMP + diphosphate + H(+). Functionally, nucleoside triphosphate pyrophosphatase that hydrolyzes dTTP and UTP. May have a dual role in cell division arrest and in preventing the incorporation of modified nucleotides into cellular nucleic acids. This Syntrophotalea carbinolica (strain DSM 2380 / NBRC 103641 / GraBd1) (Pelobacter carbinolicus) protein is dTTP/UTP pyrophosphatase.